The chain runs to 684 residues: Cleavage and polyadenylation specificity factor 73 (684 aa).

Residues His-77, His-79, Asp-81, His-82, His-164, and Asp-185 each coordinate Zn(2+). The Proton donor role is filled by His-402. His-424 contacts Zn(2+).

Belongs to the metallo-beta-lactamase superfamily. RNA-metabolizing metallo-beta-lactamase-like family. CPSF3 subfamily. Component of the cleavage and polyadenylation specificity factor (CPSF) complex, composed of at least Clp, Cpsf73, Cpsf100 and Cpsf160. Interacts with Sym and Cpsf100 forming a core cleavage factor required for both polyadenylated and histone mRNA processing. Interacts with Slbp and Lsm11. Zn(2+) is required as a cofactor.

Its subcellular location is the nucleus. Its function is as follows. Component of the cleavage and polyadenylation specificity factor (CPSF) complex that plays a key role in pre-mRNA 3'-end formation, recognizing the AAUAAA signal sequence and interacting with poly(A) polymerase and other factors to bring about cleavage and poly(A) addition. Has endonuclease activity and functions as an mRNA 3'-end-processing endonuclease. Required for the cotranscriptional processing of 3'-ends of polyadenylated and histone pre-mRNA. The polypeptide is Cleavage and polyadenylation specificity factor 73 (Cpsf73) (Drosophila melanogaster (Fruit fly)).